Consider the following 201-residue polypeptide: NAD(P)H dehydrogenase (quinone) (201 aa).

Positions 4-191 (VLVLYYSMYG…KIAKCQGVHV (188 aa)) constitute a Flavodoxin-like domain. FMN-binding positions include 10–15 (SMYGHV) and 79–81 (TRF). Tyrosine 12 contributes to the NAD(+) binding site. Tryptophan 99 provides a ligand contact to substrate. Residues 114-120 (STGTQHG) and histidine 135 contribute to the FMN site.

The protein belongs to the WrbA family. It depends on FMN as a cofactor.

It carries out the reaction a quinone + NADH + H(+) = a quinol + NAD(+). It catalyses the reaction a quinone + NADPH + H(+) = a quinol + NADP(+). This Hydrogenovibrio crunogenus (strain DSM 25203 / XCL-2) (Thiomicrospira crunogena) protein is NAD(P)H dehydrogenase (quinone).